Reading from the N-terminus, the 438-residue chain is Trigger factor (438 aa).

The PPIase FKBP-type domain occupies 163-248; the sequence is GEIAVLDFAA…VHAVKERKLP (86 aa).

It belongs to the FKBP-type PPIase family. Tig subfamily.

Its subcellular location is the cytoplasm. The enzyme catalyses [protein]-peptidylproline (omega=180) = [protein]-peptidylproline (omega=0). Its function is as follows. Involved in protein export. Acts as a chaperone by maintaining the newly synthesized protein in an open conformation. Functions as a peptidyl-prolyl cis-trans isomerase. This Oleidesulfovibrio alaskensis (strain ATCC BAA-1058 / DSM 17464 / G20) (Desulfovibrio alaskensis) protein is Trigger factor.